Here is a 466-residue protein sequence, read N- to C-terminus: 3-isopropylmalate dehydratase large subunit (466 aa).

[4Fe-4S] cluster-binding residues include cysteine 347, cysteine 407, and cysteine 410.

This sequence belongs to the aconitase/IPM isomerase family. LeuC type 1 subfamily. As to quaternary structure, heterodimer of LeuC and LeuD. It depends on [4Fe-4S] cluster as a cofactor.

It catalyses the reaction (2R,3S)-3-isopropylmalate = (2S)-2-isopropylmalate. Its pathway is amino-acid biosynthesis; L-leucine biosynthesis; L-leucine from 3-methyl-2-oxobutanoate: step 2/4. In terms of biological role, catalyzes the isomerization between 2-isopropylmalate and 3-isopropylmalate, via the formation of 2-isopropylmaleate. This Shewanella piezotolerans (strain WP3 / JCM 13877) protein is 3-isopropylmalate dehydratase large subunit.